We begin with the raw amino-acid sequence, 387 residues long: Eukaryotic translation initiation factor 3 subunit M (387 aa).

The 160-residue stretch at 181 to 340 folds into the PCI domain; the sequence is LSSKVMIELL…RKVHISSTMH (160 aa).

Belongs to the eIF-3 subunit M family. Component of the eukaryotic translation initiation factor 3 (eIF-3) complex. The eIF-3 complex interacts with pix.

It localises to the cytoplasm. Its subcellular location is the golgi apparatus. In terms of biological role, component of the eukaryotic translation initiation factor 3 (eIF-3) complex, which is involved in protein synthesis of a specialized repertoire of mRNAs and, together with other initiation factors, stimulates binding of mRNA and methionyl-tRNAi to the 40S ribosome. The eIF-3 complex specifically targets and initiates translation of a subset of mRNAs involved in cell proliferation. This chain is Eukaryotic translation initiation factor 3 subunit M, found in Drosophila persimilis (Fruit fly).